A 259-amino-acid polypeptide reads, in one-letter code: Hydroxyacylglutathione hydrolase (259 aa).

Zn(2+) is bound by residues His-56, His-58, Asp-60, His-61, His-112, Asp-133, and His-171. Residues 220 to 243 (NPFLRTGETSVKEKADERSDAQNT) form a disordered region. The segment covering 229–239 (SVKEKADERSD) has biased composition (basic and acidic residues).

It belongs to the metallo-beta-lactamase superfamily. Glyoxalase II family. As to quaternary structure, monomer. Requires Zn(2+) as cofactor.

The catalysed reaction is an S-(2-hydroxyacyl)glutathione + H2O = a 2-hydroxy carboxylate + glutathione + H(+). Its pathway is secondary metabolite metabolism; methylglyoxal degradation; (R)-lactate from methylglyoxal: step 2/2. In terms of biological role, thiolesterase that catalyzes the hydrolysis of S-D-lactoyl-glutathione to form glutathione and D-lactic acid. The chain is Hydroxyacylglutathione hydrolase from Pseudomonas syringae pv. syringae (strain B728a).